The following is a 484-amino-acid chain: Glycogen synthase (484 aa).

Lys18 is a binding site for ADP-alpha-D-glucose.

This sequence belongs to the glycosyltransferase 1 family. Bacterial/plant glycogen synthase subfamily.

It catalyses the reaction [(1-&gt;4)-alpha-D-glucosyl](n) + ADP-alpha-D-glucose = [(1-&gt;4)-alpha-D-glucosyl](n+1) + ADP + H(+). Its pathway is glycan biosynthesis; glycogen biosynthesis. Synthesizes alpha-1,4-glucan chains using ADP-glucose. This chain is Glycogen synthase, found in Vibrio cholerae serotype O1 (strain ATCC 39541 / Classical Ogawa 395 / O395).